The primary structure comprises 361 residues: Cell cycle control protein 50A (361 aa).

Positions 1–28 are disordered; the sequence is MAMNYNAKDEVDGGPPCPPGGTAKTRRP. Ala-2 is subject to N-acetylalanine. Residues 2-48 form a required for ATPase and aminophospholipid flippase activity region; sequence AMNYNAKDEVDGGPPCPPGGTAKTRRPDNTAFKQQRLPAWQPILTAG. Residues 2–49 are Cytoplasmic-facing; the sequence is AMNYNAKDEVDGGPPCPPGGTAKTRRPDNTAFKQQRLPAWQPILTAGT. Residues 49 to 348 are interaction with ATP8A2; that stretch reads TVLPTFFIIG…LGVVLLVINH (300 aa). A helical membrane pass occupies residues 50–70; that stretch reads VLPTFFIIGLIFIPIGIGIFV. Topologically, residues 71 to 325 are exoplasmic loop; sequence TSNNIREIEI…SWMGGKNPFL (255 aa). Disulfide bonds link Cys-91–Cys-104, Cys-94–Cys-102, and Cys-157–Cys-171. Residues Asn-180, Asn-190, and Asn-294 are each glycosylated (N-linked (GlcNAc...) asparagine). The chain crosses the membrane as a helical span at residues 326–346; that stretch reads GIAYITIGSISFLLGVVLLVI. The Cytoplasmic portion of the chain corresponds to 347–361; that stretch reads NHKYRNSSNTADITI.

The protein belongs to the CDC50/LEM3 family. In terms of assembly, component of various P4-ATPase flippase complexes which consists of a catalytic alpha subunit and an accessory beta subunit. Interacts with ATP8A1 to form a flippase complex; this complex forms an intermediate phosphoenzyme. Interacts with ATP8A2 to form a flippase complex. ATP8B1:TMEM30A and ATP8B2:TMEM30A flippase complexes have been shown to form intermediate phosphoenzymes in vitro. Interacts with alpha subunits ATP8A1, ATP8B1, ATP8B2, ATP8B4, ATP10A, ATP10B, ATP10D, ATP11A, ATP11B and ATP11C. N-glycosylated; contributes to ATP8A2:TMEM30A flippase complex assembly but not to functional activity. As to expression, expressed in photoreceptor cells; detected in retina outer segment and other retinal layers (at protein level).

It is found in the membrane. The protein localises to the golgi apparatus. Its subcellular location is the cytoplasmic vesicle. It localises to the secretory vesicle membrane. The protein resides in the apical cell membrane. It is found in the photoreceptor inner segment. The protein localises to the cell projection. Its subcellular location is the cilium. It localises to the photoreceptor outer segment. Its function is as follows. Accessory component of a P4-ATPase flippase complex which catalyzes the hydrolysis of ATP coupled to the transport of aminophospholipids from the outer to the inner leaflet of various membranes and ensures the maintenance of asymmetric distribution of phospholipids. Phospholipid translocation also seems to be implicated in vesicle formation and in uptake of lipid signaling molecules. The beta subunit may assist in binding of the phospholipid substrate. Required for the proper folding, assembly and ER to Golgi exit of the ATP8A2:TMEM30A flippase complex. ATP8A2:TMEM30A may be involved in regulation of neurite outgrowth, and, reconstituted to liposomes, predomiminantly transports phosphatidylserine (PS) and to a lesser extent phosphatidylethanolamine (PE). The ATP8A1:TMEM30A flippase complex seems to play a role in regulation of cell migration probably involving flippase-mediated translocation of phosphatidylethanolamine (PE) at the plasma membrane. Required for the formation of the ATP8A2, ATP8B1 and ATP8B2 P-type ATPAse intermediate phosphoenzymes. Involved in uptake of platelet-activating factor (PAF). Can also mediate the export of alpha subunits ATP8A1, ATP8B1, ATP8B2, ATP8B4, ATP10A, ATP10B, ATP10D, ATP11A, ATP11B and ATP11C from the ER to other membrane localizations. The sequence is that of Cell cycle control protein 50A from Bos taurus (Bovine).